Here is a 233-residue protein sequence, read N- to C-terminus: Thrombin-like enzyme elegaxobin-1 (233 aa).

The 224-residue stretch at V1–A224 folds into the Peptidase S1 domain. 6 disulfides stabilise this stretch: C7–C138, C25–C41, C73–C231, C117–C185, C149–C164, and C175–C200. Active-site charge relay system residues include H40 and D85. S179 (charge relay system) is an active-site residue.

This sequence belongs to the peptidase S1 family. Snake venom subfamily. In terms of assembly, monomer. As to expression, expressed by the venom gland.

The protein resides in the secreted. Thrombin-like snake venom serine protease that clots rabbit fibrinogen. Only the beta chain of fibrinogen (FGB) is cleaved, releasing fibrinopeptide B. Incubation with human fibrinogen alpha and beta resulted in cleavage of both fibrinogen chains but generated neither fibrinopeptide A nor fibrinopeptide B. Promotes clotting of rabbit fibrinogen, but not bovine or human fibrinogen. This Protobothrops elegans (Elegant pitviper) protein is Thrombin-like enzyme elegaxobin-1.